A 539-amino-acid polypeptide reads, in one-letter code: MKHTVEMVVLSVGAFLALVGAGLAQDRLFGAHMWVLFFALLAGTLVLMRRVDFRPAVAGHPGRRREYFDEVVKYGVVATVFWGVVGFLVGVVVALQLAFPELNVEPWFNFGRVRPLHTSAVIFAFGGNALIATSFYVVQRTSRARLFGGDLGWFVFWGYQLFIVLAASGYLLGITQSREYAEPEWYVDLWLTIVWVAYLVAFLGTIMKRKEPHIYVANWFYLAFIVTIAMLHVVNNLAVPVSFLGSKSYSAFSGVQDALTQWWYGHNAVGFFLTAGFLAMMYYFIPKQVNRPVYSYRLSIIHFWAIIFMYIWAGPHHLHYTALPDWAQTLGMVFSIMLWMPSWGGMINGLMTLSGAWDKIRTDPVVRMMVMAVAFYGMATFEGPMMSIKTVNSLSHYTDWTIGHVHSGALGWNGLITFGAIYYLVPKLWNRERLYSVRMVNWHFWLATLGIVVYAAVMWVAGIQQGLMWREYDDQGFLVYSFAETVAAMFPYYVMRAAGGALFLAGALLMAFNVTMTILGRVRDEEPIFGAAPLPAPAE.

A run of 3 helical transmembrane segments spans residues 4–24 (TVEM…AGLA), 28–48 (LFGA…LVLM), and 75–95 (GVVA…VVAL). Heme b is bound at residue H117. 8 helical membrane-spanning segments follow: residues 118-138 (TSAV…FYVV), 154-174 (FVFW…LLGI), 187-207 (VDLW…GTIM), 214-234 (IYVA…LHVV), 265-285 (GHNA…YYFI), 298-318 (LSII…PHHL), 330-350 (LGMV…INGL), and 368-388 (MMVM…MMSI). H266, H316, and H317 together coordinate Cu cation. Heme b-binding residues include H404 and H406. Helical transmembrane passes span 405–425 (VHSG…YYLV), 443–463 (HFWL…VAGI), 475–495 (QGFL…YYVM), and 499–519 (GGAL…MTIL).

This sequence belongs to the heme-copper respiratory oxidase family. It depends on Cu(2+) as a cofactor. Heme b serves as cofactor.

The protein localises to the cell membrane. It carries out the reaction 4 Fe(II)-[cytochrome c] + O2 + 8 H(+)(in) = 4 Fe(III)-[cytochrome c] + 2 H2O + 4 H(+)(out). It participates in energy metabolism; oxidative phosphorylation. In terms of biological role, cytochrome c oxidase is the component of the respiratory chain that catalyzes the reduction of oxygen to water. Subunits 1-3 form the functional core of the enzyme complex. Co I is the catalytic subunit of the enzyme. Electrons originating in cytochrome c or a quinol are transferred to the bimetallic center formed by a high-spin heme and copper B. The chain is Cytochrome c oxidase subunit 1 homolog, bacteroid (fixN) from Rhizobium meliloti (strain 1021) (Ensifer meliloti).